We begin with the raw amino-acid sequence, 380 residues long: Glucose-1-phosphate adenylyltransferase (380 aa).

Residues glycine 164, 179 to 180 (EK), and serine 190 each bind alpha-D-glucose 1-phosphate.

Belongs to the bacterial/plant glucose-1-phosphate adenylyltransferase family. In terms of assembly, homotetramer.

The catalysed reaction is alpha-D-glucose 1-phosphate + ATP + H(+) = ADP-alpha-D-glucose + diphosphate. It functions in the pathway glycan biosynthesis; glycogen biosynthesis. Its function is as follows. Involved in the biosynthesis of ADP-glucose, a building block required for the elongation reactions to produce glycogen. Catalyzes the reaction between ATP and alpha-D-glucose 1-phosphate (G1P) to produce pyrophosphate and ADP-Glc. The chain is Glucose-1-phosphate adenylyltransferase from Streptococcus gordonii (strain Challis / ATCC 35105 / BCRC 15272 / CH1 / DL1 / V288).